Consider the following 634-residue polypeptide: 1-deoxy-D-xylulose-5-phosphate synthase (634 aa).

Thiamine diphosphate is bound by residues His-73 and 114–116 (GHS). Mg(2+) is bound at residue Asp-145. Residues 146-147 (GS), Asn-174, Phe-285, and Glu-367 contribute to the thiamine diphosphate site. Asn-174 contributes to the Mg(2+) binding site.

Belongs to the transketolase family. DXPS subfamily. In terms of assembly, homodimer. Requires Mg(2+) as cofactor. It depends on thiamine diphosphate as a cofactor.

The catalysed reaction is D-glyceraldehyde 3-phosphate + pyruvate + H(+) = 1-deoxy-D-xylulose 5-phosphate + CO2. It functions in the pathway metabolic intermediate biosynthesis; 1-deoxy-D-xylulose 5-phosphate biosynthesis; 1-deoxy-D-xylulose 5-phosphate from D-glyceraldehyde 3-phosphate and pyruvate: step 1/1. Functionally, catalyzes the acyloin condensation reaction between C atoms 2 and 3 of pyruvate and glyceraldehyde 3-phosphate to yield 1-deoxy-D-xylulose-5-phosphate (DXP). In Syntrophotalea carbinolica (strain DSM 2380 / NBRC 103641 / GraBd1) (Pelobacter carbinolicus), this protein is 1-deoxy-D-xylulose-5-phosphate synthase.